A 54-amino-acid chain; its full sequence is Photoreceptor disk component PRCD (54 aa).

Cysteine 2 is lipidated: S-palmitoyl cysteine. The segment at 25–54 is disordered; sequence PEPSDVDGAARGSSLDADPQSSGREKEPLK.

The protein belongs to the PRCD family. As to quaternary structure, interacts with RHO/rhodopsin; the interaction promotes PRCD stability. Post-translationally, palmitoylated at Cys-2. Palmitoylation is essential for protein stability and trafficking to the photoreceptor outer segment, but does not appear to be essential for membrane localization. Probably palmitoylated by ZDHHC3. Phosphorylated.

Its subcellular location is the cell projection. The protein resides in the cilium. It localises to the photoreceptor outer segment. The protein localises to the membrane. It is found in the endoplasmic reticulum. Its subcellular location is the golgi apparatus. Involved in vision. The protein is Photoreceptor disk component PRCD of Homo sapiens (Human).